The sequence spans 150 residues: Endoribonuclease YbeY (150 aa).

Residues His108, His112, and His118 each contribute to the Zn(2+) site.

Belongs to the endoribonuclease YbeY family. It depends on Zn(2+) as a cofactor.

The protein resides in the cytoplasm. Single strand-specific metallo-endoribonuclease involved in late-stage 70S ribosome quality control and in maturation of the 3' terminus of the 16S rRNA. This chain is Endoribonuclease YbeY, found in Methylococcus capsulatus (strain ATCC 33009 / NCIMB 11132 / Bath).